The following is a 181-amino-acid chain: Large ribosomal subunit protein uL5 (181 aa).

The protein belongs to the universal ribosomal protein uL5 family. Part of the 50S ribosomal subunit; part of the 5S rRNA/L5/L18/L25 subcomplex. Contacts the 5S rRNA and the P site tRNA. Forms a bridge to the 30S subunit in the 70S ribosome.

Functionally, this is one of the proteins that bind and probably mediate the attachment of the 5S RNA into the large ribosomal subunit, where it forms part of the central protuberance. In the 70S ribosome it contacts protein S13 of the 30S subunit (bridge B1b), connecting the 2 subunits; this bridge is implicated in subunit movement. Contacts the P site tRNA; the 5S rRNA and some of its associated proteins might help stabilize positioning of ribosome-bound tRNAs. In Aster yellows witches'-broom phytoplasma (strain AYWB), this protein is Large ribosomal subunit protein uL5.